The primary structure comprises 640 residues: ESX-3 secretion system protein EccA3 (640 aa).

An ATP-binding site is contributed by glycine 393–threonine 400.

This sequence belongs to the CbxX/CfxQ family. Part of the ESX-3 / type VII secretion system (T7SS), which is composed of cytosolic and membrane components.

It is found in the cytoplasm. In terms of biological role, part of an ESX-3 / type VII specialized secretion system (T7SS), which exports several proteins. EccA3 exhibits ATPase activity and may provide energy for the export of ESX-3 substrates. The protein is ESX-3 secretion system protein EccA3 of Mycobacterium leprae (strain TN).